The chain runs to 300 residues: PAK4-inhibitor INKA2 (300 aa).

Disordered stretches follow at residues 59-104 (GGTP…SSPK), 178-201 (LEKGGEKGETGGSIEPKGEKGQSR), and 230-288 (KEKP…LEPS). Residues 60–73 (GTPTFSCPESSQEQ) show a composition bias toward polar residues. Low complexity predominate over residues 93–102 (SSSQPSFDSS). The inka box stretch occupies residues 140–183 (EPDDWTSTLMSRGRNRQPLVLGDNVFADLVGNWLDLPELEKGGE). Basic residues predominate over residues 246 to 256 (GRSKKVKKRSL).

This sequence belongs to the INKA family. Interacts with PAK4. Enriched in the nervous system.

Its subcellular location is the nucleus. Its function is as follows. Inhibitor of the serine/threonine-protein kinase PAK4. Acts by binding PAK4 in a substrate-like manner, inhibiting the protein kinase activity. The protein is PAK4-inhibitor INKA2 of Mus musculus (Mouse).